The following is a 222-amino-acid chain: Small ribosomal subunit protein uS3 (222 aa).

The region spanning 39 to 108 is the KH type-2 domain; the sequence is IRKFVKNKLS…NVLINIVEVK (70 aa).

It belongs to the universal ribosomal protein uS3 family. As to quaternary structure, part of the 30S ribosomal subunit. Forms a tight complex with proteins S10 and S14.

Binds the lower part of the 30S subunit head. Binds mRNA in the 70S ribosome, positioning it for translation. This chain is Small ribosomal subunit protein uS3, found in Clostridium acetobutylicum (strain ATCC 824 / DSM 792 / JCM 1419 / IAM 19013 / LMG 5710 / NBRC 13948 / NRRL B-527 / VKM B-1787 / 2291 / W).